We begin with the raw amino-acid sequence, 586 residues long: Arginine--tRNA ligase (586 aa).

The 'HIGH' region signature appears at 128-138; it reads ANPTGPLHVGH.

Belongs to the class-I aminoacyl-tRNA synthetase family. In terms of assembly, monomer.

It localises to the cytoplasm. It catalyses the reaction tRNA(Arg) + L-arginine + ATP = L-arginyl-tRNA(Arg) + AMP + diphosphate. In Coxiella burnetii (strain RSA 331 / Henzerling II), this protein is Arginine--tRNA ligase.